A 100-amino-acid chain; its full sequence is MAVAYCCLSLFLVSTWVALLLQPLQGTWGAPLEPMYPGDYATPEQMAQYETQLRRYINTLTRPRYGKRAEEENTGGLPGVQLSPCTSPPVGLIPCSAPWS.

The signal sequence occupies residues 1 to 29; that stretch reads MAVAYCCLSLFLVSTWVALLLQPLQGTWG. Tyrosine 65 is modified (tyrosine amide).

It belongs to the NPY family. Post-translationally, no icosapeptide-like peptide is cleaved from the C-terminal.

Its subcellular location is the secreted. Hormone secreted by pancreatic cells that acts as a regulator of pancreatic and gastrointestinal functions probably by signaling through the G protein-coupled receptor NPY4R2. The chain is Pancreatic polypeptide prohormone (Ppy) from Mus musculus (Mouse).